We begin with the raw amino-acid sequence, 138 residues long: Small ribosomal subunit protein uS11c (138 aa).

This sequence belongs to the universal ribosomal protein uS11 family. Part of the 30S ribosomal subunit.

It localises to the plastid. The protein localises to the chloroplast. This is Small ribosomal subunit protein uS11c from Morus indica (Mulberry).